Consider the following 244-residue polypeptide: 14-3-3 protein beta/alpha (244 aa).

Met-1 carries the post-translational modification N-acetylmethionine. Residue Ser-184 is modified to Phosphoserine.

It belongs to the 14-3-3 family. Homodimer, and heterodimer with other family members. Post-translationally, phosphorylated.

It is found in the cytoplasm. Its function is as follows. Adapter protein implicated in the regulation of a large spectrum of both general and specialized signaling pathways. Binds to a large number of partners, usually by recognition of a phosphoserine or phosphothreonine motif. Binding generally results in the modulation of the activity of the binding partner. This Gallus gallus (Chicken) protein is 14-3-3 protein beta/alpha (YWHAB).